The following is a 220-amino-acid chain: HTH-type transcriptional repressor GlaR (220 aa).

The region spanning 1 to 69 (MTITSLDGYR…NQKGYRVASM (69 aa)) is the HTH gntR-type domain. The segment at residues 29-48 (MSLLTSRYALGVGPLREALS) is a DNA-binding region (H-T-H motif).

Its subcellular location is the cytoplasm. Its activity is regulated as follows. The repressive effect at the glaH promoter site is specifically relieved upon glutarate binding. Its function is as follows. Negatively regulates the expression of the glaH-lhgD-gabDTP operon in a temporal manner during entry into stationary phase or during the first few hours of carbon starvation. Thereby is involved in the regulation of a L-lysine degradation pathway that proceeds via cadaverine, glutarate and L-2-hydroxyglutarate. Binds to two primary and two secondary sites in the promoter region of the glaH operon with the consensus sequences TTGTN5TTTT and ATGTN5TTTT of the primary sites, each separated by six nucleotides. This chain is HTH-type transcriptional repressor GlaR, found in Escherichia coli (strain K12).